A 356-amino-acid polypeptide reads, in one-letter code: Peptide chain release factor 1 (356 aa).

Glutamine 233 carries the post-translational modification N5-methylglutamine.

This sequence belongs to the prokaryotic/mitochondrial release factor family. Post-translationally, methylated by PrmC. Methylation increases the termination efficiency of RF1.

It localises to the cytoplasm. Peptide chain release factor 1 directs the termination of translation in response to the peptide chain termination codons UAG and UAA. This Halalkalibacterium halodurans (strain ATCC BAA-125 / DSM 18197 / FERM 7344 / JCM 9153 / C-125) (Bacillus halodurans) protein is Peptide chain release factor 1.